Here is a 177-residue protein sequence, read N- to C-terminus: Large ribosomal subunit protein uL6 (177 aa).

Belongs to the universal ribosomal protein uL6 family. In terms of assembly, part of the 50S ribosomal subunit.

Its function is as follows. This protein binds to the 23S rRNA, and is important in its secondary structure. It is located near the subunit interface in the base of the L7/L12 stalk, and near the tRNA binding site of the peptidyltransferase center. This Vibrio vulnificus (strain CMCP6) protein is Large ribosomal subunit protein uL6.